The primary structure comprises 82 residues: Defensin-like protein 156 (82 aa).

The N-terminal stretch at 1–27 (MAKISCSYFLVLMLVFSVFSLVEKTKG) is a signal peptide. 4 disulfides stabilise this stretch: C31-C77, C41-C60, C46-C71, and C50-C73.

The protein belongs to the DEFL family. In terms of tissue distribution, expressed in flower buds, but not in stems, roots or rosette leaves.

The protein resides in the secreted. This Arabidopsis thaliana (Mouse-ear cress) protein is Defensin-like protein 156 (LCR21).